We begin with the raw amino-acid sequence, 132 residues long: Fumarate reductase subunit C (132 aa).

3 helical membrane passes run 36–56 (AIPTLWFCLVLLYGVISLGSL), 70–90 (IVIILNIITLGAMLLNTVTYY), and 110–130 (IITMALWAVTAFISLVILVFM).

The protein belongs to the FrdC family. As to quaternary structure, part of an enzyme complex containing four subunits: a flavoprotein (FrdA), an iron-sulfur protein (FrdB), and two hydrophobic anchor proteins (FrdC and FrdD).

It is found in the cell inner membrane. Functionally, anchors the catalytic components of the fumarate reductase complex to the cell membrane, binds quinones. The chain is Fumarate reductase subunit C from Pasteurella multocida (strain Pm70).